A 141-amino-acid chain; its full sequence is Hemoglobin subunit alpha (141 aa).

One can recognise a Globin domain in the interval 1–141 (VLSSADKANI…VSTVLTSKYR (141 aa)). Residue Ser3 is modified to Phosphoserine. 2 positions are modified to N6-succinyllysine: Lys7 and Lys11. Lys16 is subject to N6-acetyllysine; alternate. Lys16 carries the post-translational modification N6-succinyllysine; alternate. The residue at position 24 (Tyr24) is a Phosphotyrosine. N6-succinyllysine is present on Lys40. Ser49 is subject to Phosphoserine. Residue His58 coordinates O2. Heme b is bound at residue His87. Ser102 carries the phosphoserine modification. Residue Thr108 is modified to Phosphothreonine. Phosphoserine occurs at positions 124 and 131. Residues Thr134 and Thr137 each carry the phosphothreonine modification. At Ser138 the chain carries Phosphoserine.

It belongs to the globin family. As to quaternary structure, heterotetramer of two alpha chains and two beta chains. In terms of tissue distribution, red blood cells.

Involved in oxygen transport from the lung to the various peripheral tissues. Functionally, hemopressin acts as an antagonist peptide of the cannabinoid receptor CNR1. Hemopressin-binding efficiently blocks cannabinoid receptor CNR1 and subsequent signaling. In Proteles cristata (Aardwolf), this protein is Hemoglobin subunit alpha (HBA).